Here is a 918-residue protein sequence, read N- to C-terminus: Hexokinase-1 (918 aa).

At Met1 the chain carries N-acetylmethionine. The segment at 1-10 is mitochondrial-binding peptide (MBP); the sequence is MIAAQLLAYY. Hexokinase domains are found at residues 16-458 and 464-906; these read DDQV…MVTA and AEQH…LITA. ATP is bound by residues Arg30 and 84–89; that span reads DLGGSS. The interval 73-207 is hexokinase small subdomain 1; sequence DGSEKGDFIA…DYDANIVAVV (135 aa). 84–91 serves as a coordination point for D-glucose 6-phosphate; it reads DLGGSSFR. Residues Ser155, 172–173, and 208–209 contribute to the D-glucose site; these read TK and ND. Residues 208-447 are hexokinase large subdomain 1; it reads NDTVGTMIDC…SDVRFLLSES (240 aa). Positions 209 and 232 each coordinate D-glucose 6-phosphate. D-glucose contacts are provided by residues Asn235, Glu260, and 291–294; that span reads QRFE. The residue at position 337 (Ser337) is a Phosphoserine. Residue 413-415 coordinates D-glucose 6-phosphate; that stretch reads DGS. ATP is bound by residues 425–426 and 532–537; these read RR and DLGGTN. The interval 521–655 is hexokinase small subdomain 2; that stretch reads DGTEDGDFLA…EFDLDVVAVV (135 aa). 532-536 serves as a coordination point for D-glucose 6-phosphate; it reads DLGGT. D-glucose-binding positions include 603-604, 620-621, and 656-657; these read SF, TK, and ND. The interval 656 to 895 is hexokinase large subdomain 2; that stretch reads NDTVGTMMTC…CNVSFLLSED (240 aa). Residues Asp657 and Thr680 each contribute to the D-glucose 6-phosphate site. Thr680 serves as a coordination point for ATP. Residues 682–683, Glu708, and Glu742 contribute to the D-glucose site; that span reads SN. ATP is bound by residues 747 to 748, 784 to 788, and 863 to 867; these read GI, TKFLS, and TLYKL. Residues 861-863 and Ser897 contribute to the D-glucose 6-phosphate site; that span reads DGT.

It belongs to the hexokinase family. Monomer. Interacts with RABL2/RABL2A; binds preferentially to GTP-bound RABL2. Interacts with VDAC1. The HK1-VDAC1 complex interacts with ATF2. Interacts (via N-terminal spermatogenic cell-specific region) with PFKM (via C-terminus). Interacts with SMAD5.

The protein localises to the mitochondrion outer membrane. The protein resides in the cytoplasm. It localises to the cytosol. It catalyses the reaction a D-hexose + ATP = a D-hexose 6-phosphate + ADP + H(+). The enzyme catalyses D-fructose + ATP = D-fructose 6-phosphate + ADP + H(+). It carries out the reaction D-glucose + ATP = D-glucose 6-phosphate + ADP + H(+). The catalysed reaction is D-mannose + ATP = D-mannose 6-phosphate + ADP + H(+). It catalyses the reaction D-glucosamine + ATP = D-glucosamine 6-phosphate + ADP + H(+). It participates in carbohydrate metabolism; hexose metabolism. The protein operates within carbohydrate degradation; glycolysis; D-glyceraldehyde 3-phosphate and glycerone phosphate from D-glucose: step 1/4. With respect to regulation, hexokinase is an allosteric enzyme inhibited by its product D-glucose 6-phosphate. Hexokinase activity is inhibited by N-acetyl-D-glucosamine. Catalyzes the phosphorylation of various hexoses, such as D-glucose, D-glucosamine, D-fructose, D-mannose and 2-deoxy-D-glucose, to hexose 6-phosphate (D-glucose 6-phosphate, D-glucosamine 6-phosphate, D-fructose 6-phosphate, D-mannose 6-phosphate and 2-deoxy-D-glucose 6-phosphate, respectively). Does not phosphorylate N-acetyl-D-glucosamine. Mediates the initial step of glycolysis by catalyzing phosphorylation of D-glucose to D-glucose 6-phosphate. Involved in innate immunity and inflammation by acting as a pattern recognition receptor for bacterial peptidoglycan. When released in the cytosol, N-acetyl-D-glucosamine component of bacterial peptidoglycan inhibits the hexokinase activity of HK1 and causes its dissociation from mitochondrial outer membrane, thereby activating the NLRP3 inflammasome. The polypeptide is Hexokinase-1 (Bos taurus (Bovine)).